Here is a 406-residue protein sequence, read N- to C-terminus: 5-cytosine rRNA methyltransferase NSUN4 (406 aa).

S-adenosyl-L-methionine is bound by residues Gly-207, Gly-208, Lys-209, Asp-226, Arg-231, Asp-259, Gly-260, and Asp-277. The Nucleophile role is filled by Cys-332.

Belongs to the class I-like SAM-binding methyltransferase superfamily. RsmB/NOP family.

It localises to the mitochondrion. It catalyses the reaction a cytidine in rRNA + S-adenosyl-L-methionine = a 5-methylcytidine in rRNA + S-adenosyl-L-homocysteine + H(+). The enzyme catalyses a cytidine in mRNA + S-adenosyl-L-methionine = a 5-methylcytidine in mRNA + S-adenosyl-L-homocysteine + H(+). In terms of biological role, mitochondrial RNA cytosine C(5)-methyltransferase that methylates cytosine to 5-methylcytosine (m5C) in various RNAs, such as rRNAs, mRNAs and some long non-coding RNAs (lncRNAs). Involved in mitochondrial ribosome small subunit (SSU) maturation by catalyzing methylation of mitochondrial 12S rRNA. This Xenopus laevis (African clawed frog) protein is 5-cytosine rRNA methyltransferase NSUN4 (nsun4).